A 485-amino-acid polypeptide reads, in one-letter code: UDP-N-acetylmuramate--L-alanine ligase (485 aa).

112 to 118 (GTHGKTT) provides a ligand contact to ATP.

The protein belongs to the MurCDEF family.

It is found in the cytoplasm. It catalyses the reaction UDP-N-acetyl-alpha-D-muramate + L-alanine + ATP = UDP-N-acetyl-alpha-D-muramoyl-L-alanine + ADP + phosphate + H(+). It functions in the pathway cell wall biogenesis; peptidoglycan biosynthesis. Functionally, cell wall formation. The polypeptide is UDP-N-acetylmuramate--L-alanine ligase (Variovorax paradoxus (strain S110)).